The following is a 152-amino-acid chain: Transcriptional regulator MraZ (152 aa).

2 consecutive SpoVT-AbrB domains span residues 5 to 52 (ANAI…PLPE) and 81 to 124 (ATEG…DHSV).

This sequence belongs to the MraZ family. In terms of assembly, forms oligomers.

It localises to the cytoplasm. The protein localises to the nucleoid. The chain is Transcriptional regulator MraZ from Pseudoalteromonas atlantica (strain T6c / ATCC BAA-1087).